The sequence spans 96 residues: Signal recognition particle 19 kDa protein (96 aa).

This sequence belongs to the SRP19 family. Part of the signal recognition particle protein translocation system, which is composed of SRP and FtsY. Archaeal SRP consists of a 7S RNA molecule of 300 nucleotides and two protein subunits: SRP54 and SRP19.

It localises to the cytoplasm. In terms of biological role, involved in targeting and insertion of nascent membrane proteins into the cytoplasmic membrane. Binds directly to 7S RNA and mediates binding of the 54 kDa subunit of the SRP. This chain is Signal recognition particle 19 kDa protein, found in Pyrobaculum arsenaticum (strain DSM 13514 / JCM 11321 / PZ6).